A 418-amino-acid chain; its full sequence is UDP-N-acetylglucosamine 1-carboxyvinyltransferase (418 aa).

22 to 23 lines the phosphoenolpyruvate pocket; sequence KN. Arg-91 contributes to the UDP-N-acetyl-alpha-D-glucosamine binding site. Cys-115 serves as the catalytic Proton donor. Cys-115 carries the post-translational modification 2-(S-cysteinyl)pyruvic acid O-phosphothioketal. The UDP-N-acetyl-alpha-D-glucosamine site is built by Asp-305 and Ile-327.

It belongs to the EPSP synthase family. MurA subfamily.

It localises to the cytoplasm. The enzyme catalyses phosphoenolpyruvate + UDP-N-acetyl-alpha-D-glucosamine = UDP-N-acetyl-3-O-(1-carboxyvinyl)-alpha-D-glucosamine + phosphate. It functions in the pathway cell wall biogenesis; peptidoglycan biosynthesis. Its function is as follows. Cell wall formation. Adds enolpyruvyl to UDP-N-acetylglucosamine. In Aeromonas hydrophila subsp. hydrophila (strain ATCC 7966 / DSM 30187 / BCRC 13018 / CCUG 14551 / JCM 1027 / KCTC 2358 / NCIMB 9240 / NCTC 8049), this protein is UDP-N-acetylglucosamine 1-carboxyvinyltransferase.